The primary structure comprises 304 residues: MSSTLSVPAQAPETGTARVKRGMAEQLKGGVIMDVVTPEQAKIAEDAGAVAVMALERVPADIRKDGGVARMSDPDMIEGIISAVSIPVMAKSRIGHFVEAQVLQSLGVDYIDESEVLTPADEVNHSDKWAFTTPFVCGATNLGEALRRIAEGAAMIRSKGEAGTGNVVEAVRHLRQIKNEIARLRGYDNNELYAAAKELRAPYEIVKEVAELGKLPVVLFSAGGVATPADAALMRQLGAEGVFVGSGIFKSGDPAKRAAAIVKATTFYDDPKIIADASRNLGEAMVGINCDTLPEAERYANRGW.

Position 34 (D34) interacts with D-ribose 5-phosphate. K91 functions as the Schiff-base intermediate with D-ribose 5-phosphate in the catalytic mechanism. G163 is a D-ribose 5-phosphate binding site. R175 serves as a coordination point for D-glyceraldehyde 3-phosphate. D-ribose 5-phosphate is bound by residues G224 and 245–246 (GS).

This sequence belongs to the PdxS/SNZ family. As to quaternary structure, in the presence of PdxT, forms a dodecamer of heterodimers.

The catalysed reaction is aldehydo-D-ribose 5-phosphate + D-glyceraldehyde 3-phosphate + L-glutamine = pyridoxal 5'-phosphate + L-glutamate + phosphate + 3 H2O + H(+). The protein operates within cofactor biosynthesis; pyridoxal 5'-phosphate biosynthesis. In terms of biological role, catalyzes the formation of pyridoxal 5'-phosphate from ribose 5-phosphate (RBP), glyceraldehyde 3-phosphate (G3P) and ammonia. The ammonia is provided by the PdxT subunit. Can also use ribulose 5-phosphate and dihydroxyacetone phosphate as substrates, resulting from enzyme-catalyzed isomerization of RBP and G3P, respectively. In Streptomyces avermitilis (strain ATCC 31267 / DSM 46492 / JCM 5070 / NBRC 14893 / NCIMB 12804 / NRRL 8165 / MA-4680), this protein is Pyridoxal 5'-phosphate synthase subunit PdxS.